A 137-amino-acid chain; its full sequence is Large ribosomal subunit protein bL12 (137 aa).

It belongs to the bacterial ribosomal protein bL12 family. In terms of assembly, homodimer. Part of the ribosomal stalk of the 50S ribosomal subunit. Forms a multimeric L10(L12)X complex, where L10 forms an elongated spine to which 2 to 4 L12 dimers bind in a sequential fashion. Binds GTP-bound translation factors.

In terms of biological role, forms part of the ribosomal stalk which helps the ribosome interact with GTP-bound translation factors. Is thus essential for accurate translation. In Gloeobacter violaceus (strain ATCC 29082 / PCC 7421), this protein is Large ribosomal subunit protein bL12.